A 130-amino-acid polypeptide reads, in one-letter code: Small ribosomal subunit protein uS11 (130 aa).

This sequence belongs to the universal ribosomal protein uS11 family. In terms of assembly, part of the 30S ribosomal subunit. Interacts with proteins S7 and S18. Binds to IF-3.

Functionally, located on the platform of the 30S subunit, it bridges several disparate RNA helices of the 16S rRNA. Forms part of the Shine-Dalgarno cleft in the 70S ribosome. In Xanthomonas campestris pv. campestris (strain B100), this protein is Small ribosomal subunit protein uS11.